The primary structure comprises 30 residues: Trypsin inhibitor 3 (30 aa).

The residue at position 1 (Gln-1) is a Pyrrolidone carboxylic acid. 3 disulfide bridges follow: Cys-4–Cys-21, Cys-11–Cys-23, and Cys-17–Cys-29.

Its subcellular location is the secreted. Inhibits trypsin; probably participates in a plant defense mechanism. This chain is Trypsin inhibitor 3, found in Momordica cochinchinensis (Spiny bitter cucumber).